Consider the following 365-residue polypeptide: MTCSSFGKCGSCVLWEMPYDEQLKMKSEKLKEMFSEFDMPEIEVVHGSDEHFRARAEFRVWHEGDKSYYAMRKRKEDGRGVIPIEECKIVDKAIYDIMTPLLKEIEKNDNLRFKLYEIDFLSNSKGELIITLIYHKKVDESIAEDIKKLKEKFKNADFIVRKKGRKYVFDKNYLIEELNINSKTYKYKIIENTFSQPNRQMNQKMIEWAMRNSEDLKGDLVELYCGNGNFTIPLSERFNKVIATEISKESIEAATYNAEINARDNITFLAMSAAEFSKLYKDRSPLITKYDLKNILIDPPRAGLDDKSREFVNEFDNIIYISCNPETLQRDLKTLAKGREIKAFAFFDQFPYTNHAECGVILKKN.

The S-adenosyl-L-methionine site is built by Gln196, Tyr224, Asn229, Glu245, and Asp298. The active-site Nucleophile is Cys323. Glu357 (proton acceptor) is an active-site residue.

This sequence belongs to the class I-like SAM-binding methyltransferase superfamily. RNA M5U methyltransferase family. TrmA subfamily.

The enzyme catalyses uridine(54) in tRNA + S-adenosyl-L-methionine = 5-methyluridine(54) in tRNA + S-adenosyl-L-homocysteine + H(+). It catalyses the reaction uridine(341) in tmRNA + S-adenosyl-L-methionine = 5-methyluridine(341) in tmRNA + S-adenosyl-L-homocysteine + H(+). Its function is as follows. Dual-specificity methyltransferase that catalyzes the formation of 5-methyluridine at position 54 (m5U54) in all tRNAs, and that of position 341 (m5U341) in tmRNA (transfer-mRNA). This Nautilia profundicola (strain ATCC BAA-1463 / DSM 18972 / AmH) protein is tRNA/tmRNA (uracil-C(5))-methyltransferase.